A 126-amino-acid chain; its full sequence is uncharacterized protein (126 aa).

This is an uncharacterized protein from Saccharomyces cerevisiae (strain ATCC 204508 / S288c) (Baker's yeast).